The primary structure comprises 103 residues: Integration host factor subunit beta (103 aa).

This sequence belongs to the bacterial histone-like protein family. Heterodimer of an alpha and a beta chain.

This protein is one of the two subunits of integration host factor, a specific DNA-binding protein that functions in genetic recombination as well as in transcriptional and translational control. In Rhizobium meliloti (strain 1021) (Ensifer meliloti), this protein is Integration host factor subunit beta.